A 238-amino-acid polypeptide reads, in one-letter code: Ribonuclease PH (238 aa).

Phosphate is bound by residues R86 and 124–126 (GTR).

This sequence belongs to the RNase PH family. Homohexameric ring arranged as a trimer of dimers.

The enzyme catalyses tRNA(n+1) + phosphate = tRNA(n) + a ribonucleoside 5'-diphosphate. In terms of biological role, phosphorolytic 3'-5' exoribonuclease that plays an important role in tRNA 3'-end maturation. Removes nucleotide residues following the 3'-CCA terminus of tRNAs; can also add nucleotides to the ends of RNA molecules by using nucleoside diphosphates as substrates, but this may not be physiologically important. Probably plays a role in initiation of 16S rRNA degradation (leading to ribosome degradation) during starvation. The polypeptide is Ribonuclease PH (Rhizorhabdus wittichii (strain DSM 6014 / CCUG 31198 / JCM 15750 / NBRC 105917 / EY 4224 / RW1) (Sphingomonas wittichii)).